The chain runs to 509 residues: Hexokinase-4, chloroplastic (509 aa).

Residues 1 to 37 constitute a chloroplast transit peptide; the sequence is MSAAAAIASPIPAAIAVVQQQRRGRSRGGGSGAAAVR. One can recognise a Hexokinase domain in the interval 45–496; it reads SAIAPILADL…SGIGAALLAA (452 aa). Residues 100–238 are hexokinase small subdomain; sequence TGNETGLFYA…GLDMRVSALV (139 aa). ADP-binding residues include glycine 114, threonine 115, and asparagine 116. 4 residues coordinate D-glucose: threonine 204, lysine 205, asparagine 239, and aspartate 240. Positions 239-485 are hexokinase large subdomain; the sequence is NDTVGTLAGA…NRIAIEHTKD (247 aa). Threonine 263 is an ADP binding site. Residues asparagine 266, glutamate 294, and glutamate 324 each coordinate D-glucose. Position 450 (glycine 450) interacts with ADP.

This sequence belongs to the hexokinase family. In terms of tissue distribution, expressed in roots, leaves, flowers, immature seeds, endosperm and seed coat.

It is found in the plastid. The protein resides in the chloroplast stroma. The catalysed reaction is a D-hexose + ATP = a D-hexose 6-phosphate + ADP + H(+). It catalyses the reaction D-fructose + ATP = D-fructose 6-phosphate + ADP + H(+). The enzyme catalyses D-glucose + ATP = D-glucose 6-phosphate + ADP + H(+). Its pathway is carbohydrate metabolism; hexose metabolism. The protein operates within carbohydrate degradation; glycolysis; D-glyceraldehyde 3-phosphate and glycerone phosphate from D-glucose: step 1/4. Functionally, fructose and glucose phosphorylating enzyme. The chain is Hexokinase-4, chloroplastic (HXK4) from Oryza sativa subsp. japonica (Rice).